Reading from the N-terminus, the 542-residue chain is Chaperonin GroEL 2 (542 aa).

ATP is bound by residues 30-33, Lys51, 87-91, Gly415, and Asp496; these read TLGP and DGTTT.

Belongs to the chaperonin (HSP60) family. Forms a cylinder of 14 subunits composed of two heptameric rings stacked back-to-back. Interacts with the co-chaperonin GroES.

It is found in the cytoplasm. It catalyses the reaction ATP + H2O + a folded polypeptide = ADP + phosphate + an unfolded polypeptide.. Its function is as follows. Together with its co-chaperonin GroES, plays an essential role in assisting protein folding. The GroEL-GroES system forms a nano-cage that allows encapsulation of the non-native substrate proteins and provides a physical environment optimized to promote and accelerate protein folding. This is Chaperonin GroEL 2 from Rhizobium meliloti (strain 1021) (Ensifer meliloti).